The following is a 285-amino-acid chain: tRNA (guanine-N(7)-)-methyltransferase (285 aa).

S-adenosyl-L-methionine-binding positions include glycine 102, 125–126 (EI), 160–161 (NA), and cysteine 180. The active site involves aspartate 183. 258–260 (TEE) serves as a coordination point for S-adenosyl-L-methionine.

Belongs to the class I-like SAM-binding methyltransferase superfamily. TrmB family. As to quaternary structure, forms a complex with TRM82.

It is found in the nucleus. It catalyses the reaction guanosine(46) in tRNA + S-adenosyl-L-methionine = N(7)-methylguanosine(46) in tRNA + S-adenosyl-L-homocysteine. Its pathway is tRNA modification; N(7)-methylguanine-tRNA biosynthesis. Its function is as follows. Catalyzes the formation of N(7)-methylguanine at position 46 (m7G46) in tRNA. The sequence is that of tRNA (guanine-N(7)-)-methyltransferase from Candida glabrata (strain ATCC 2001 / BCRC 20586 / JCM 3761 / NBRC 0622 / NRRL Y-65 / CBS 138) (Yeast).